Consider the following 478-residue polypeptide: Adenosylhomocysteinase (478 aa).

Substrate contacts are provided by Thr56, Asp139, and Glu201. An NAD(+)-binding site is contributed by 202 to 204 (TTT). Substrate contacts are provided by Lys231 and Asp235. NAD(+) is bound by residues Asn236, 265–270 (GYGDVG), Glu288, Asn323, 344–346 (IGH), and Asn392.

The protein belongs to the adenosylhomocysteinase family. The cofactor is NAD(+).

It is found in the cytoplasm. The enzyme catalyses S-adenosyl-L-homocysteine + H2O = L-homocysteine + adenosine. The protein operates within amino-acid biosynthesis; L-homocysteine biosynthesis; L-homocysteine from S-adenosyl-L-homocysteine: step 1/1. In terms of biological role, may play a key role in the regulation of the intracellular concentration of adenosylhomocysteine. The chain is Adenosylhomocysteinase from Corynebacterium diphtheriae (strain ATCC 700971 / NCTC 13129 / Biotype gravis).